We begin with the raw amino-acid sequence, 557 residues long: Formate--tetrahydrofolate ligase (557 aa).

An ATP-binding site is contributed by 65 to 72; that stretch reads TPAGEGKT.

This sequence belongs to the formate--tetrahydrofolate ligase family.

It carries out the reaction (6S)-5,6,7,8-tetrahydrofolate + formate + ATP = (6R)-10-formyltetrahydrofolate + ADP + phosphate. The protein operates within one-carbon metabolism; tetrahydrofolate interconversion. The sequence is that of Formate--tetrahydrofolate ligase from Acidiphilium cryptum (strain JF-5).